The primary structure comprises 247 residues: tRNA1(Val) (adenine(37)-N6)-methyltransferase (247 aa).

Belongs to the methyltransferase superfamily. tRNA (adenine-N(6)-)-methyltransferase family.

Its subcellular location is the cytoplasm. The enzyme catalyses adenosine(37) in tRNA1(Val) + S-adenosyl-L-methionine = N(6)-methyladenosine(37) in tRNA1(Val) + S-adenosyl-L-homocysteine + H(+). Specifically methylates the adenine in position 37 of tRNA(1)(Val) (anticodon cmo5UAC). The sequence is that of tRNA1(Val) (adenine(37)-N6)-methyltransferase from Edwardsiella ictaluri (strain 93-146).